The sequence spans 474 residues: Methylenetetrahydrofolate--tRNA-(uracil-5-)-methyltransferase TrmFO (474 aa).

15–20 serves as a coordination point for FAD; the sequence is GAGLAG. The segment at 453–474 is disordered; the sequence is PLLPTAPDTTGAAGEETTQAES.

The protein belongs to the MnmG family. TrmFO subfamily. The cofactor is FAD.

It localises to the cytoplasm. It catalyses the reaction uridine(54) in tRNA + (6R)-5,10-methylene-5,6,7,8-tetrahydrofolate + NADH + H(+) = 5-methyluridine(54) in tRNA + (6S)-5,6,7,8-tetrahydrofolate + NAD(+). The enzyme catalyses uridine(54) in tRNA + (6R)-5,10-methylene-5,6,7,8-tetrahydrofolate + NADPH + H(+) = 5-methyluridine(54) in tRNA + (6S)-5,6,7,8-tetrahydrofolate + NADP(+). Functionally, catalyzes the folate-dependent formation of 5-methyl-uridine at position 54 (M-5-U54) in all tRNAs. The sequence is that of Methylenetetrahydrofolate--tRNA-(uracil-5-)-methyltransferase TrmFO from Nitratidesulfovibrio vulgaris (strain ATCC 29579 / DSM 644 / CCUG 34227 / NCIMB 8303 / VKM B-1760 / Hildenborough) (Desulfovibrio vulgaris).